We begin with the raw amino-acid sequence, 149 residues long: 3-dehydroquinate dehydratase (149 aa).

Tyrosine 26 functions as the Proton acceptor in the catalytic mechanism. 3 residues coordinate substrate: asparagine 77, histidine 83, and aspartate 90. Histidine 103 serves as the catalytic Proton donor. Substrate is bound by residues 104–105 (LS) and arginine 114.

The protein belongs to the type-II 3-dehydroquinase family. Homododecamer.

It carries out the reaction 3-dehydroquinate = 3-dehydroshikimate + H2O. The protein operates within metabolic intermediate biosynthesis; chorismate biosynthesis; chorismate from D-erythrose 4-phosphate and phosphoenolpyruvate: step 3/7. Functionally, catalyzes a trans-dehydration via an enolate intermediate. The protein is 3-dehydroquinate dehydratase of Vibrio vulnificus (strain YJ016).